A 159-amino-acid chain; its full sequence is uncharacterized protein (159 aa).

The protein localises to the mitochondrion. This is an uncharacterized protein from Arabidopsis thaliana (Mouse-ear cress).